The primary structure comprises 441 residues: GTPase Der (441 aa).

EngA-type G domains follow at residues 4–169 (SIVA…PPEA) and 178–353 (PRIA…QNRN). Residues 10–17 (GRPNVGKS), 57–61 (DTGGI), 120–123 (NKVD), 184–191 (GKPNVGKS), 231–235 (DTAGL), and 296–299 (NKWD) contribute to the GTP site. In terms of domain architecture, KH-like spans 354-438 (LRISTGVLNE…SLKFFIRERK (85 aa)).

This sequence belongs to the TRAFAC class TrmE-Era-EngA-EngB-Septin-like GTPase superfamily. EngA (Der) GTPase family. As to quaternary structure, associates with the 50S ribosomal subunit.

Its function is as follows. GTPase that plays an essential role in the late steps of ribosome biogenesis. This chain is GTPase Der, found in Lachnoclostridium phytofermentans (strain ATCC 700394 / DSM 18823 / ISDg) (Clostridium phytofermentans).